The sequence spans 25 residues: Antifungal protein 1 (25 aa).

The tract at residues 1–25 is disordered; it reads QSERFEQQMQGQDFSHDERFLSQAA. A compositionally biased stretch (basic and acidic residues) spans 14–25; that stretch reads FSHDERFLSQAA.

It belongs to the 2S seed storage albumins family. As to expression, expressed in seed (at protein level). Not detected in pulp, stems and leaves.

Has strong antifungal activity against T.harzianum, F.oxysporum and A.fumigatus with IC(50) values of 32 ug/ml, 34 ug/ml and 40 ug/ml, restectively. Lacks antifungal activity against R.solani, P.brasiliensis and C.albicans. This chain is Antifungal protein 1, found in Passiflora edulis (Passion fruit).